The primary structure comprises 293 residues: 4-hydroxy-tetrahydrodipicolinate synthase (293 aa).

Thr-47 provides a ligand contact to pyruvate. The Proton donor/acceptor role is filled by Tyr-136. Residue Lys-164 is the Schiff-base intermediate with substrate of the active site. Ile-206 lines the pyruvate pocket.

It belongs to the DapA family. Homotetramer; dimer of dimers.

It is found in the cytoplasm. The catalysed reaction is L-aspartate 4-semialdehyde + pyruvate = (2S,4S)-4-hydroxy-2,3,4,5-tetrahydrodipicolinate + H2O + H(+). It functions in the pathway amino-acid biosynthesis; L-lysine biosynthesis via DAP pathway; (S)-tetrahydrodipicolinate from L-aspartate: step 3/4. In terms of biological role, catalyzes the condensation of (S)-aspartate-beta-semialdehyde [(S)-ASA] and pyruvate to 4-hydroxy-tetrahydrodipicolinate (HTPA). The polypeptide is 4-hydroxy-tetrahydrodipicolinate synthase (Listeria monocytogenes serotype 4a (strain HCC23)).